Here is a 231-residue protein sequence, read N- to C-terminus: Orotidine 5'-phosphate decarboxylase (231 aa).

Residues Asp-11, Lys-33, 60–69 (DLKFHDIPNT), Thr-120, Arg-181, Gln-190, Gly-210, and Arg-211 contribute to the substrate site. Lys-62 acts as the Proton donor in catalysis.

Belongs to the OMP decarboxylase family. Type 1 subfamily. Homodimer.

It carries out the reaction orotidine 5'-phosphate + H(+) = UMP + CO2. Its pathway is pyrimidine metabolism; UMP biosynthesis via de novo pathway; UMP from orotate: step 2/2. Functionally, catalyzes the decarboxylation of orotidine 5'-monophosphate (OMP) to uridine 5'-monophosphate (UMP). The protein is Orotidine 5'-phosphate decarboxylase of Vibrio cholerae serotype O1 (strain ATCC 39315 / El Tor Inaba N16961).